A 343-amino-acid polypeptide reads, in one-letter code: MLQTYLQSIMNQSHLTYDEAESVTNLMLNGSDPHQIAAFLAVLKYRGETPTEIAGMVSALQKQATSVDLPFPALDIVGTGGDLANTVNISTGSAILSAACGIPIAKHGNRSVSSQSGSADVLEALGIEIEMTPEELLSCIQEVGIGFMFAPIYHPSLKKLAPIRKGMKIPSTFNILGPLLNPANTEYSLIGVSNEPILELMSEVCLQFQNTQRTFLFHGSGLDELTTLGKVVGYDIQQGKKTRIEIDPTSFGFASCKIEELKGGDSKMNAFILKKAFSGQQGAIADALIFNAGAAVWIFGNATTLEEGIQIARQTLMEGEALRVLEKWVAFSQQLKLKRGSCN.

5-phospho-alpha-D-ribose 1-diphosphate contacts are provided by residues Gly78, 81–82 (GD), Thr86, 88–91 (NIST), 106–114 (KHGNRSVSS), and Ser118. An anthranilate-binding site is contributed by Gly78. Position 90 (Ser90) interacts with Mg(2+). Asn109 contacts anthranilate. Arg164 provides a ligand contact to anthranilate. Asp223 and Glu224 together coordinate Mg(2+).

The protein belongs to the anthranilate phosphoribosyltransferase family. As to quaternary structure, homodimer. Requires Mg(2+) as cofactor.

The catalysed reaction is N-(5-phospho-beta-D-ribosyl)anthranilate + diphosphate = 5-phospho-alpha-D-ribose 1-diphosphate + anthranilate. It participates in amino-acid biosynthesis; L-tryptophan biosynthesis; L-tryptophan from chorismate: step 2/5. Functionally, catalyzes the transfer of the phosphoribosyl group of 5-phosphorylribose-1-pyrophosphate (PRPP) to anthranilate to yield N-(5'-phosphoribosyl)-anthranilate (PRA). The sequence is that of Anthranilate phosphoribosyltransferase from Chlamydia felis (strain Fe/C-56) (Chlamydophila felis).